We begin with the raw amino-acid sequence, 467 residues long: 3-isopropylmalate dehydratase large subunit (467 aa).

Residues Cys-347, Cys-407, and Cys-410 each contribute to the [4Fe-4S] cluster site.

It belongs to the aconitase/IPM isomerase family. LeuC type 1 subfamily. As to quaternary structure, heterodimer of LeuC and LeuD. [4Fe-4S] cluster serves as cofactor.

The enzyme catalyses (2R,3S)-3-isopropylmalate = (2S)-2-isopropylmalate. The protein operates within amino-acid biosynthesis; L-leucine biosynthesis; L-leucine from 3-methyl-2-oxobutanoate: step 2/4. Functionally, catalyzes the isomerization between 2-isopropylmalate and 3-isopropylmalate, via the formation of 2-isopropylmaleate. The polypeptide is 3-isopropylmalate dehydratase large subunit (Gloeothece citriformis (strain PCC 7424) (Cyanothece sp. (strain PCC 7424))).